Consider the following 286-residue polypeptide: Pantothenate synthetase (286 aa).

30–37 (MGALHEGH) serves as a coordination point for ATP. Catalysis depends on histidine 37, which acts as the Proton donor. Glutamine 61 serves as a coordination point for (R)-pantoate. A beta-alanine-binding site is contributed by glutamine 61. 147 to 150 (GEKD) provides a ligand contact to ATP. A (R)-pantoate-binding site is contributed by glutamine 153. Residues valine 180 and 188 to 191 (LSSR) each bind ATP.

It belongs to the pantothenate synthetase family. Homodimer.

It is found in the cytoplasm. It carries out the reaction (R)-pantoate + beta-alanine + ATP = (R)-pantothenate + AMP + diphosphate + H(+). It participates in cofactor biosynthesis; (R)-pantothenate biosynthesis; (R)-pantothenate from (R)-pantoate and beta-alanine: step 1/1. Catalyzes the condensation of pantoate with beta-alanine in an ATP-dependent reaction via a pantoyl-adenylate intermediate. The polypeptide is Pantothenate synthetase (Novosphingobium aromaticivorans (strain ATCC 700278 / DSM 12444 / CCUG 56034 / CIP 105152 / NBRC 16084 / F199)).